We begin with the raw amino-acid sequence, 638 residues long: 1-deoxy-D-xylulose-5-phosphate synthase (638 aa).

Thiamine diphosphate is bound by residues His-76 and 117–119 (AHS). Mg(2+) is bound at residue Asp-148. Thiamine diphosphate-binding positions include 149 to 150 (GS), Asn-177, Tyr-287, and Glu-369. Asn-177 contributes to the Mg(2+) binding site.

This sequence belongs to the transketolase family. DXPS subfamily. Homodimer. The cofactor is Mg(2+). Thiamine diphosphate serves as cofactor.

It catalyses the reaction D-glyceraldehyde 3-phosphate + pyruvate + H(+) = 1-deoxy-D-xylulose 5-phosphate + CO2. The protein operates within metabolic intermediate biosynthesis; 1-deoxy-D-xylulose 5-phosphate biosynthesis; 1-deoxy-D-xylulose 5-phosphate from D-glyceraldehyde 3-phosphate and pyruvate: step 1/1. Its function is as follows. Catalyzes the acyloin condensation reaction between C atoms 2 and 3 of pyruvate and glyceraldehyde 3-phosphate to yield 1-deoxy-D-xylulose-5-phosphate (DXP). In Rhodopseudomonas palustris (strain BisB5), this protein is 1-deoxy-D-xylulose-5-phosphate synthase.